Reading from the N-terminus, the 179-residue chain is MARLQKFYKEEVIKKLQSELGLKNVMEVPRLEKITINMGVGEAVNDKKIMDNAVRDLALISGQKPVVTKSKKSIAGFKIRDGWAIGCKVTLRRQQMYEFLDRLINVSLPRTRDFRGLNPKSFDGRGNYTFGVKEHIIFPEIDFEKTDAIRGMDITFTTSAKDNAQAKALLEAFGFPFRG.

Belongs to the universal ribosomal protein uL5 family. Part of the 50S ribosomal subunit; part of the 5S rRNA/L5/L18/L25 subcomplex. Contacts the 5S rRNA and the P site tRNA. Forms a bridge to the 30S subunit in the 70S ribosome.

Functionally, this is one of the proteins that bind and probably mediate the attachment of the 5S RNA into the large ribosomal subunit, where it forms part of the central protuberance. In the 70S ribosome it contacts protein S13 of the 30S subunit (bridge B1b), connecting the 2 subunits; this bridge is implicated in subunit movement. Contacts the P site tRNA; the 5S rRNA and some of its associated proteins might help stabilize positioning of ribosome-bound tRNAs. In Dichelobacter nodosus (strain VCS1703A), this protein is Large ribosomal subunit protein uL5.